Reading from the N-terminus, the 857-residue chain is Facilitated trehalose transporter Tret1-1 (857 aa).

Disordered regions lie at residues 1 to 27 (MSGRDNRGAGGGGGGHQPLSNAMGKLK) and 92 to 203 (SFRP…KATS). At 1 to 392 (MSGRDNRGAG…VYRPTTNPIY (392 aa)) the chain is on the cytoplasmic side. Over residues 134 to 143 (EIREHRDRQQ) the composition is skewed to basic and acidic residues. Residues 171 to 181 (GNSNTNSNKAA) show a composition bias toward polar residues. Phosphoserine is present on residues Ser248, Ser249, Ser250, Ser320, and Ser322. The disordered stretch occupies residues 327–346 (LTSRQHFQQQRSISTDSRKS). Over residues 330–341 (RQHFQQQRSIST) the composition is skewed to polar residues. A helical transmembrane segment spans residues 393–413 (IWTQVLAALSVSLGSLVVGFV). The Extracellular portion of the chain corresponds to 414–440 (SAYTSPALVSMTDRNITSFEVTQDAGS). Asn428 carries N-linked (GlcNAc...) asparagine glycosylation. The chain crosses the membrane as a helical span at residues 441–461 (WVGGIMPLAALAGGITGGPLI). Residues 462 to 473 (EYLGRRNTILAT) are Cytoplasmic-facing. The chain crosses the membrane as a helical span at residues 474–494 (AVPFIVSSLLIACAVNVAMVL). At 495-497 (CGR) the chain is on the extracellular side. The chain crosses the membrane as a helical span at residues 498-518 (FLAGFCVGIASLSLPVYLGET). Residues 519 to 528 (VQPEVRGTLG) lie on the Cytoplasmic side of the membrane. A helical transmembrane segment spans residues 529-549 (LLPTAFGNIGILLCFVAGSFM). An N-linked (GlcNAc...) asparagine glycan is attached at Asn550. The Extracellular segment spans residues 550-552 (NWS). A helical transmembrane segment spans residues 553 to 573 (MLAFLGAALPVPFLILMFLIP). The Cytoplasmic portion of the chain corresponds to 574 to 636 (ETPRWFVGRG…ELLKLNNLKP (63 aa)). The helical transmembrane segment at 637 to 657 (LSISLGLMFFQQFSGINAVIF) threads the bilayer. Topologically, residues 658 to 673 (YTVQIFKDAGSTIDGN) are extracellular. The helical transmembrane segment at 674–694 (LCTIIVGIVNFLATFIGIVLI) threads the bilayer. The Cytoplasmic segment spans residues 695–700 (DRAGRK). A helical transmembrane segment spans residues 701–721 (ILLYVSDIAMVLTLFVLGGFF). Topologically, residues 722–740 (YCKANGPDVSHLGWLPLTC) are extracellular. The chain crosses the membrane as a helical span at residues 741–761 (FVIYILGFSLGFGPIPWLMMG). At 762–767 (EILPAK) the chain is on the cytoplasmic side. A helical transmembrane segment spans residues 768–788 (IRGSAASVATAFNWFCTFVVT). Residues 789-801 (KTFQDLTVAMGAH) are Extracellular-facing. The chain crosses the membrane as a helical span at residues 802-822 (GAFWLFGAICFVGLFFVIIYV). The Cytoplasmic segment spans residues 823 to 857 (PETQGKTLEDIERKMMGRVRRMSSVANIKPLSFNM). Phosphoserine occurs at positions 845 and 846.

This sequence belongs to the major facilitator superfamily. Sugar transporter (TC 2.A.1.1) family. Trehalose transporter subfamily.

It localises to the cell membrane. Its function is as follows. Low-capacity facilitative transporter for trehalose. Does not transport maltose, sucrose or lactose. Mediates the bidirectional transfer of trehalose. Responsible for the transport of trehalose synthesized in the fat body and the incorporation of trehalose into other tissues that require a carbon source, thereby regulating trehalose levels in the hemolymph. In Drosophila sechellia (Fruit fly), this protein is Facilitated trehalose transporter Tret1-1.